The chain runs to 316 residues: UPF0613 protein PB24D3.06c (316 aa).

Belongs to the UPF0613 family.

Its subcellular location is the cytoplasm. It localises to the nucleus. The polypeptide is UPF0613 protein PB24D3.06c (Schizosaccharomyces pombe (strain 972 / ATCC 24843) (Fission yeast)).